A 214-amino-acid chain; its full sequence is Acetoin utilization protein AcuB (214 aa).

CBS domains lie at 7-66 and 78-135; these read MKRD…ENKR and MKKD…GADQ.

In terms of assembly, interacts with YabA.

The protein operates within ketone degradation; acetoin degradation. Functionally, role in growth and sporulation on acetoin or butanediol. Involved in the breakdown of these compounds used as a carbon source. This Bacillus subtilis (strain 168) protein is Acetoin utilization protein AcuB (acuB).